Consider the following 1393-residue polypeptide: DNA-directed RNA polymerase subunit beta' (1393 aa).

Residues cysteine 70, cysteine 72, cysteine 85, and cysteine 88 each contribute to the Zn(2+) site. Mg(2+)-binding residues include aspartate 461, aspartate 463, and aspartate 465. The Zn(2+) site is built by cysteine 815, cysteine 889, cysteine 896, and cysteine 899.

The protein belongs to the RNA polymerase beta' chain family. In terms of assembly, the RNAP catalytic core consists of 2 alpha, 1 beta, 1 beta' and 1 omega subunit. When a sigma factor is associated with the core the holoenzyme is formed, which can initiate transcription. Mg(2+) serves as cofactor. Zn(2+) is required as a cofactor.

The enzyme catalyses RNA(n) + a ribonucleoside 5'-triphosphate = RNA(n+1) + diphosphate. Its function is as follows. DNA-dependent RNA polymerase catalyzes the transcription of DNA into RNA using the four ribonucleoside triphosphates as substrates. The polypeptide is DNA-directed RNA polymerase subunit beta' (Vesicomyosocius okutanii subsp. Calyptogena okutanii (strain HA)).